We begin with the raw amino-acid sequence, 577 residues long: Outer spore wall assembly protein SHE10 (577 aa).

The N-terminal stretch at 1–23 is a signal peptide; the sequence is MGKLIKLITTLTVLVSLLQYCCE. 2 coiled-coil regions span residues 379-416 and 513-561; these read NETR…ENVE and ILRS…EEDV. Basic and acidic residues predominate over residues 525-545; sequence RERKERERKEREKAAAEEFQR. The disordered stretch occupies residues 525–577; the sequence is RERKERERKEREKAAAEEFQRQQELLLQQEEEDEEDVSYTSTSTITTTTTMTL. Low complexity predominate over residues 562-577; sequence SYTSTSTITTTTTMTL.

It belongs to the SHE10 family. As to quaternary structure, component of the mitochondria-localized RNase mitochondrial RNA-processing (RNase MRP) composed of one single RNA encoded by the NME1 gene and at least 31 proteins. Absent in the nucleus-localized RNase MRP (NuMRP).

It is found in the mitochondrion. Its function is as follows. Involved in spore wall assembly. May be a component of the mitochondrial RNase MRP (MtMRP), a ribonucleoprotein endoribonuclease involved in the cleaving RNA transcripts to generate primers for DNA replication in mitochondria. This chain is Outer spore wall assembly protein SHE10, found in Saccharomyces cerevisiae (strain RM11-1a) (Baker's yeast).